The primary structure comprises 608 residues: Phosphogluconate dehydratase (608 aa).

Residues Cys-154 and Cys-221 each coordinate [4Fe-4S] cluster.

This sequence belongs to the IlvD/Edd family. It depends on [4Fe-4S] cluster as a cofactor.

It catalyses the reaction 6-phospho-D-gluconate = 2-dehydro-3-deoxy-6-phospho-D-gluconate + H2O. It participates in carbohydrate metabolism; Entner-Doudoroff pathway. Functionally, catalyzes the dehydration of 6-phospho-D-gluconate to 2-dehydro-3-deoxy-6-phospho-D-gluconate. This is Phosphogluconate dehydratase from Helicobacter pylori (strain J99 / ATCC 700824) (Campylobacter pylori J99).